A 337-amino-acid chain; its full sequence is Ribonucleoside-diphosphate reductase small chain (337 aa).

Fe cation is bound by residues aspartate 85, glutamate 116, and histidine 119. Residue tyrosine 123 is part of the active site. The Fe cation site is built by glutamate 178, glutamate 212, and histidine 215.

It belongs to the ribonucleoside diphosphate reductase small chain family. In terms of assembly, heterodimer of a large and a small subunit. Fe cation is required as a cofactor.

The enzyme catalyses a 2'-deoxyribonucleoside 5'-diphosphate + [thioredoxin]-disulfide + H2O = a ribonucleoside 5'-diphosphate + [thioredoxin]-dithiol. Provides the precursors necessary for DNA synthesis. Catalyzes the biosynthesis of deoxyribonucleotides from the corresponding ribonucleotides. This Trypanosoma brucei brucei protein is Ribonucleoside-diphosphate reductase small chain (RNR2).